The primary structure comprises 109 residues: MTALVAYRNLWRAANIAFQGDAPVLAAARQQIRDNFREKSTLPANDPTIQPMIEKAEEVAKFLRHNLVQGQPQGNDSFKLRIHKDTERGDNDSIKTAGQGKSSGGCCQG.

The tract at residues 68-109 is disordered; the sequence is VQGQPQGNDSFKLRIHKDTERGDNDSIKTAGQGKSSGGCCQG. Residues 83–93 are compositionally biased toward basic and acidic residues; that stretch reads HKDTERGDNDS.

This sequence belongs to the complex I LYR family. MZM1 subfamily. As to quaternary structure, interacts with RIP1.

It localises to the mitochondrion matrix. Its function is as follows. Assembly factor required for Rieske Fe-S protein RIP1 incorporation into the cytochrome b-c1 (CIII) complex. Functions as a chaperone, binding to this subunit within the mitochondrial matrix and stabilizing it prior to its translocation and insertion into the late CIII dimeric intermediate within the mitochondrial inner membrane. Modulates the mitochondrial matrix zinc pool. The polypeptide is Mitochondrial zinc maintenance protein 1, mitochondrial (MZM1) (Verticillium alfalfae (strain VaMs.102 / ATCC MYA-4576 / FGSC 10136) (Verticillium wilt of alfalfa)).